A 479-amino-acid polypeptide reads, in one-letter code: Bifunctional protein HldE (479 aa).

The segment at 1-322 is ribokinase; sequence MLAETQLAPI…AALERTAAQI (322 aa). 198-201 is a binding site for ATP; sequence NRRE. D267 is a catalytic residue. The interval 350-479 is cytidylyltransferase; sequence FTNGCFDLVH…TSSLVAKART (130 aa).

In the N-terminal section; belongs to the carbohydrate kinase PfkB family. The protein in the C-terminal section; belongs to the cytidylyltransferase family. In terms of assembly, homodimer.

It catalyses the reaction D-glycero-beta-D-manno-heptose 7-phosphate + ATP = D-glycero-beta-D-manno-heptose 1,7-bisphosphate + ADP + H(+). The enzyme catalyses D-glycero-beta-D-manno-heptose 1-phosphate + ATP + H(+) = ADP-D-glycero-beta-D-manno-heptose + diphosphate. It functions in the pathway nucleotide-sugar biosynthesis; ADP-L-glycero-beta-D-manno-heptose biosynthesis; ADP-L-glycero-beta-D-manno-heptose from D-glycero-beta-D-manno-heptose 7-phosphate: step 1/4. It participates in nucleotide-sugar biosynthesis; ADP-L-glycero-beta-D-manno-heptose biosynthesis; ADP-L-glycero-beta-D-manno-heptose from D-glycero-beta-D-manno-heptose 7-phosphate: step 3/4. Catalyzes the phosphorylation of D-glycero-D-manno-heptose 7-phosphate at the C-1 position to selectively form D-glycero-beta-D-manno-heptose-1,7-bisphosphate. Functionally, catalyzes the ADP transfer from ATP to D-glycero-beta-D-manno-heptose 1-phosphate, yielding ADP-D-glycero-beta-D-manno-heptose. This Azorhizobium caulinodans (strain ATCC 43989 / DSM 5975 / JCM 20966 / LMG 6465 / NBRC 14845 / NCIMB 13405 / ORS 571) protein is Bifunctional protein HldE.